Consider the following 200-residue polypeptide: Large ribosomal subunit protein uL4 (200 aa).

A disordered region spans residues 43 to 71 (RAQKTRAEVSGSGKKPWRQKGTGRARSGD).

The protein belongs to the universal ribosomal protein uL4 family. As to quaternary structure, part of the 50S ribosomal subunit.

Its function is as follows. One of the primary rRNA binding proteins, this protein initially binds near the 5'-end of the 23S rRNA. It is important during the early stages of 50S assembly. It makes multiple contacts with different domains of the 23S rRNA in the assembled 50S subunit and ribosome. Forms part of the polypeptide exit tunnel. The polypeptide is Large ribosomal subunit protein uL4 (Histophilus somni (strain 2336) (Haemophilus somnus)).